A 153-amino-acid chain; its full sequence is Endoribonuclease YbeY (153 aa).

Zn(2+) contacts are provided by His114, His118, and His124.

The protein belongs to the endoribonuclease YbeY family. Zn(2+) is required as a cofactor.

Its subcellular location is the cytoplasm. Single strand-specific metallo-endoribonuclease involved in late-stage 70S ribosome quality control and in maturation of the 3' terminus of the 16S rRNA. The polypeptide is Endoribonuclease YbeY (Shewanella sp. (strain MR-4)).